Consider the following 40-residue polypeptide: Large ribosomal subunit protein bL36A (40 aa).

It belongs to the bacterial ribosomal protein bL36 family.

The protein is Large ribosomal subunit protein bL36A of Saccharopolyspora erythraea (strain ATCC 11635 / DSM 40517 / JCM 4748 / NBRC 13426 / NCIMB 8594 / NRRL 2338).